The sequence spans 88 residues: Phosphocarrier protein HPr (88 aa).

One can recognise an HPr domain in the interval 1-88; the sequence is MEQQSYTIID…DVLSKEGLTE (88 aa). Catalysis depends on H15, which acts as the Pros-phosphohistidine intermediate. The residue at position 46 (S46) is a Phosphoserine; by HPrK/P.

Belongs to the HPr family.

The protein resides in the cytoplasm. With respect to regulation, phosphorylation on Ser-46 inhibits the phosphoryl transfer from enzyme I to HPr. Its function is as follows. General (non sugar-specific) component of the phosphoenolpyruvate-dependent sugar phosphotransferase system (sugar PTS). This major carbohydrate active-transport system catalyzes the phosphorylation of incoming sugar substrates concomitantly with their translocation across the cell membrane. The phosphoryl group from phosphoenolpyruvate (PEP) is transferred to the phosphoryl carrier protein HPr by enzyme I. Phospho-HPr then transfers it to the PTS EIIA domain. Functionally, P-Ser-HPr interacts with the catabolite control protein A (CcpA), forming a complex that binds to DNA at the catabolite response elements cre, operator sites preceding a large number of catabolite-regulated genes. Thus, P-Ser-HPr is a corepressor in carbon catabolite repression (CCR), a mechanism that allows bacteria to coordinate and optimize the utilization of available carbon sources. P-Ser-HPr also plays a role in inducer exclusion, in which it probably interacts with several non-PTS permeases and inhibits their transport activity. This chain is Phosphocarrier protein HPr (ptsH), found in Staphylococcus carnosus.